We begin with the raw amino-acid sequence, 777 residues long: MSAQTSLAEKGLNPGLMCQESYACSGTDEAIFECDECCSLQCLRCEEELHRQERLRNHERIRLKAGHVPYCDPCKGPNGHSPGVRQRAAVRCQTCKINLCLECQKRTHSGGNKRRHPITVYLVSKVQESLEGEEMDEETKRKKMTERVVSFLLVDENEEIQVTNEEDFIRKLDCKPDQHLKVVSIFGNTGDGKSHTLNHTFFYGREVFKTSPAQESCTVGVWAAYDPVHKVAVIDTEGLLGATVNLSQRTRLLLKVLAISDLVIYRTHADRLHNDLFKFLGDASEAYLKHFTKELKATTARCGLDVPLSTLGPAVIIFHETVHTQLLGSDHPSEAPEKLIQDRFRKLGRFPEAFSSIHYKGTRTYNPPTDFSGLRRALEQLLENNTTRSPRHPGVIFKALKALSDRFSGEIPDDQMAHSSFFPDEYFTCSSLCLSCGAGCKNSMNHGKEGVPHEAKSRCRYSHQYDNRVYTCKACYERGKEVSVVPKTSASTDSPWMGLAKYAWSGYVIECPNCGVVYRSRQYWFGNQDPVDTVVRTEIVHVWPGTDAFLKDNNNAAQRLLDGMNFMAQSVSELSLGPTKAVTSWLTDQIAPAYWRPNSQILSCNQCATSFKDNDTKHHCRACGEGFCDSCSSKTRPVPERGWGPAPVRVCDSCYDARNVQLDVTEAQADDEGGTLIARKVGEAVQNTLGAVVTAIDIPLGLVKDAARPAYWVPDHEILHCHNCRKEFSVKLSKHHCRACGQGFCDECSHDCRAVPSRGWDHPVRVCFNCNKKPGDL.

The segment at 416-777 is required for localization in the lipid droplets; the sequence is MAHSSFFPDE…FNCNKKPGDL (362 aa). FYVE-type zinc fingers lie at residues 598–659 and 715–775; these read NSQI…DARN and DHEI…KKPG. Residues Cys604, Cys607, Cys620, Cys623, Cys628, Cys631, Cys651, Cys654, Cys721, Cys724, Cys737, Cys740, Cys745, Cys748, Cys767, and Cys770 each coordinate Zn(2+).

Interacts with RAB18 (in GTP-bound form). Interacts with BSCL2 in a RAB18-dependent manner. Interacts with ZW10. As to expression, ubiquitous.

The protein localises to the golgi apparatus. Its subcellular location is the golgi stack. It localises to the endoplasmic reticulum. The protein resides in the preautophagosomal structure. It is found in the lipid droplet. The protein localises to the mitochondrion. In terms of biological role, plays a role in the formation of lipid droplets (LDs) which are storage organelles at the center of lipid and energy homeostasis. Regulates the morphology, size and distribution of LDs. Mediates the formation of endoplasmic reticulum-lipid droplets (ER-LD) contact sites by forming a complex with RAB18 and ZW10. Binds to phosphatidylinositol 3-phosphate (PtdIns3P) through FYVE-type zinc finger. This Mus musculus (Mouse) protein is Zinc finger FYVE domain-containing protein 1 (Zfyve1).